The following is a 257-amino-acid chain: Auxin-responsive protein IAA17 (257 aa).

Disordered stretches follow at residues 1–51 (MSPP…PAAT) and 85–119 (GKKA…QVVG). The short motif at 33–37 (LRLGL) is the EAR-like (transcriptional repression) element. Positions 105–118 (AAAPQAPAAKAQVV) are enriched in low complexity. The PB1 domain occupies 151 to 239 (FLYVKVSMDG…SCRRLRIMKG (89 aa)).

The protein belongs to the Aux/IAA family. As to quaternary structure, homodimers and heterodimers. Highly expressed in etiolated seedlings and flowers. Expressed in roots and green seedlings.

The protein localises to the nucleus. Functionally, aux/IAA proteins are short-lived transcriptional factors that function as repressors of early auxin response genes at low auxin concentrations. The chain is Auxin-responsive protein IAA17 (IAA17) from Oryza sativa subsp. japonica (Rice).